The following is a 115-amino-acid chain: NADH-ubiquinone oxidoreductase chain 3 (115 aa).

A run of 3 helical transmembrane segments spans residues 3–23 (LILM…IVAF), 56–76 (FFLV…LLPL), and 84–104 (PTLM…GLIY).

It belongs to the complex I subunit 3 family.

The protein resides in the mitochondrion membrane. The catalysed reaction is a ubiquinone + NADH + 5 H(+)(in) = a ubiquinol + NAD(+) + 4 H(+)(out). Core subunit of the mitochondrial membrane respiratory chain NADH dehydrogenase (Complex I) that is believed to belong to the minimal assembly required for catalysis. Complex I functions in the transfer of electrons from NADH to the respiratory chain. The immediate electron acceptor for the enzyme is believed to be ubiquinone. This chain is NADH-ubiquinone oxidoreductase chain 3 (MT-ND3), found in Polypterus ornatipinnis (Ornate bichir).